A 234-amino-acid polypeptide reads, in one-letter code: Leucyl/phenylalanyl-tRNA--protein transferase (234 aa).

Belongs to the L/F-transferase family.

It is found in the cytoplasm. It carries out the reaction N-terminal L-lysyl-[protein] + L-leucyl-tRNA(Leu) = N-terminal L-leucyl-L-lysyl-[protein] + tRNA(Leu) + H(+). It catalyses the reaction N-terminal L-arginyl-[protein] + L-leucyl-tRNA(Leu) = N-terminal L-leucyl-L-arginyl-[protein] + tRNA(Leu) + H(+). The catalysed reaction is L-phenylalanyl-tRNA(Phe) + an N-terminal L-alpha-aminoacyl-[protein] = an N-terminal L-phenylalanyl-L-alpha-aminoacyl-[protein] + tRNA(Phe). Functionally, functions in the N-end rule pathway of protein degradation where it conjugates Leu, Phe and, less efficiently, Met from aminoacyl-tRNAs to the N-termini of proteins containing an N-terminal arginine or lysine. The protein is Leucyl/phenylalanyl-tRNA--protein transferase of Salmonella agona (strain SL483).